Consider the following 284-residue polypeptide: Kynurenine formamidase avaC (284 aa).

The HGGXW motif lies at histidine 47–tryptophan 51. Residue serine 130 is the Nucleophile of the active site.

The protein belongs to the kynurenine formamidase family.

It carries out the reaction N-formyl-L-kynurenine + H2O = L-kynurenine + formate + H(+). It functions in the pathway secondary metabolite metabolism. Functionally, kynurenine formamidase; part of the cluster that mediates the biosynthesis of a highly modified cyclo-arginine-tryptophan dipeptide (cRW). Within the pathway, avaC catalyzes the deformylation of the cyclo-Arg-formylkynurenine iketopiperazine (DKP), produced by the FAD-dependent monooxygenase avaB. The first step of the pathway is perfornmed by the arginine-containing cyclodipeptide synthase (RCPDS) avaA that acts as the scaffold-generating enzyme and is responsible for formation of the cyclo-Arg-Trp (cRW) diketopiperazine. AvaB then acts as a multifunctional flavoenzyme that is responsible for generating the cyclo-Arg-formylkynurenine DKP, which can be deformylated by avaC. AvaB then further catalyzes an additional N-oxidation followed by cyclization and dehydration. The next step is an N-acetylation of the guanidine group catalyzed by the arginine N-acetyltransferase avaD. The roles of the additional enzymes identified within the ava cluster still have to be determined. This Aspergillus versicolor protein is Kynurenine formamidase avaC.